Here is a 355-residue protein sequence, read N- to C-terminus: Glucose-6-phosphatase 2 (355 aa).

Residues 1-24 lie on the Lumenal side of the membrane; sequence MDFLHRSGVLIIHHLQEDYRTYYG. A helical membrane pass occupies residues 25-45; that stretch reads FLNFMSNVGDPRNIFSIYFPL. Over 46 to 56 the chain is Cytoplasmic; the sequence is WFQLNQNVGTK. Residues 57–77 traverse the membrane as a helical segment; the sequence is MIWVAVIGDWFNLIFKWILFG. Topologically, residues 78 to 115 are lumenal; that stretch reads HRPYWWIQETEIYPNHSSPCLEQFPTTCETGPGSPSGH. Substrate is bound at residue Arg79. N-linked (GlcNAc...) asparagine glycosylation is present at Asn92. His115 functions as the Proton donor in the catalytic mechanism. A helical membrane pass occupies residues 116-136; that stretch reads AMGSSCVWYVMVTAALSYTIS. Over 137–146 the chain is Cytoplasmic; it reads RMEESSVTLH. Residues 147 to 167 traverse the membrane as a helical segment; the sequence is RLTWSFLWSVFWLIQISVCIS. Position 168 (Arg168) is a topological domain, lumenal. Arg168 is a binding site for substrate. Residues 169-189 traverse the membrane as a helical segment; it reads VFIATHFPHQVILGVIGGMLV. Catalysis depends on His174, which acts as the Nucleophile. The Cytoplasmic portion of the chain corresponds to 190–211; sequence AEAFEHTPGVHMASLSVYLKTN. Residues 212–232 form a helical membrane-spanning segment; the sequence is VFLFLFALGFYLLLRLFGIDL. The Lumenal segment spans residues 233–252; that stretch reads LWSVPIAKKWCANPDWIHID. The chain crosses the membrane as a helical span at residues 253 to 273; sequence STPFAGLVRNLGVLFGLGFAI. The Cytoplasmic portion of the chain corresponds to 274–290; it reads NSEMFLRSCQGENGTKP. Residues 291 to 307 form a helical membrane-spanning segment; that stretch reads SFRLLCALTSLTTMQLY. At 308–318 the chain is on the lumenal side; it reads RFIKIPTHAEP. Residues 319–339 form a helical membrane-spanning segment; that stretch reads LFYLLSFCKSASIPLMVVALI. The Cytoplasmic segment spans residues 340-355; the sequence is PYCVHMLMRPGDKKTK. A Prevents secretion from ER motif is present at residues 352–355; it reads KKTK.

Belongs to the glucose-6-phosphatase family. Post-translationally, N-glycosylated; the non-glycosylated form is more unstable and is degraded through the proteasome. As to expression, specifically expressed in pancreatic islet cells, in particular those of beta-cell origin. Not detected in testis, kidney, muscle, liver, lung, spleen, brain, pituitary, gastric fundus or heart.

It localises to the endoplasmic reticulum membrane. It carries out the reaction D-glucose 6-phosphate + H2O = D-glucose + phosphate. It functions in the pathway carbohydrate biosynthesis; gluconeogenesis. Its function is as follows. May hydrolyze glucose-6-phosphate to glucose in the endoplasmic reticulum. May be responsible for glucose production through glycogenolysis and gluconeogenesis. In Mus musculus (Mouse), this protein is Glucose-6-phosphatase 2 (G6pc2).